The chain runs to 365 residues: UPF0283 membrane protein Avi_2471 (365 aa).

Residues 1–10 (MSKAPEDQRP) are compositionally biased toward basic and acidic residues. The segment at 1–47 (MSKAPEDQRPMPRRPAAFSLEEPSSSPARPPFAEAQEPQRRAPKSFD) is disordered. 2 helical membrane passes run 83–103 (FGKL…GLWI) and 117–137 (LGYT…VVVI).

Belongs to the UPF0283 family.

It is found in the cell inner membrane. In Allorhizobium ampelinum (strain ATCC BAA-846 / DSM 112012 / S4) (Agrobacterium vitis (strain S4)), this protein is UPF0283 membrane protein Avi_2471.